The primary structure comprises 54 residues: uncharacterized protein (54 aa).

This sequence to B.subtilis XkdX.

This is an uncharacterized protein from Bacillus subtilis (strain 168).